We begin with the raw amino-acid sequence, 262 residues long: Ribose-5-phosphate isomerase A (262 aa).

Residues 33–36 (TGST), 89–92 (DGAD), and 102–105 (KGGG) each bind substrate. The active-site Proton acceptor is glutamate 111. Lysine 129 is a binding site for substrate.

It belongs to the ribose 5-phosphate isomerase family. Homodimer.

The enzyme catalyses aldehydo-D-ribose 5-phosphate = D-ribulose 5-phosphate. It functions in the pathway carbohydrate degradation; pentose phosphate pathway; D-ribose 5-phosphate from D-ribulose 5-phosphate (non-oxidative stage): step 1/1. Its function is as follows. Catalyzes the reversible conversion of ribose-5-phosphate to ribulose 5-phosphate. This is Ribose-5-phosphate isomerase A from Cereibacter sphaeroides (strain ATCC 17023 / DSM 158 / JCM 6121 / CCUG 31486 / LMG 2827 / NBRC 12203 / NCIMB 8253 / ATH 2.4.1.) (Rhodobacter sphaeroides).